Reading from the N-terminus, the 632-residue chain is tRNA uridine 5-carboxymethylaminomethyl modification enzyme MnmG (632 aa).

FAD is bound by residues 15 to 20 (GAGHAG), Val-127, and Ser-182. Residues 203–226 (TPPRVKSSTIDYSKTEEQPGDDHP) are disordered. Residues 215–226 (SKTEEQPGDDHP) are compositionally biased toward basic and acidic residues. NAD(+) is bound at residue 274–288 (GARYCPSIEDKIVRF). Residue Gln-371 coordinates FAD.

The protein belongs to the MnmG family. Homodimer. Heterotetramer of two MnmE and two MnmG subunits. It depends on FAD as a cofactor.

It is found in the cytoplasm. NAD-binding protein involved in the addition of a carboxymethylaminomethyl (cmnm) group at the wobble position (U34) of certain tRNAs, forming tRNA-cmnm(5)s(2)U34. The protein is tRNA uridine 5-carboxymethylaminomethyl modification enzyme MnmG of Listeria monocytogenes serotype 4b (strain F2365).